The primary structure comprises 371 residues: Lysine racemase (371 aa).

K39 (proton acceptor) is an active-site residue. Residue K39 is modified to N6-(pyridoxal phosphate)lysine. R135 lines the substrate pocket. The Proton acceptor role is filled by Y266. M313 is a binding site for substrate.

This sequence belongs to the alanine racemase family. In terms of assembly, homodimer. Requires pyridoxal 5'-phosphate as cofactor.

The catalysed reaction is L-lysine = D-lysine. Catalyzes the interconversion of D-lysine and L-lysine. Can also use arginine and ornithine, but not alanine. The polypeptide is Lysine racemase (Oenococcus oeni (strain ATCC BAA-331 / PSU-1)).